Consider the following 157-residue polypeptide: Baculoviral IAP repeat-containing protein 5.2-B (157 aa).

One copy of the BIR repeat lies at arginine 31–alanine 101. Threonine 47 bears the Phosphothreonine; by CDK1 mark. 4 residues coordinate Zn(2+): cysteine 70, cysteine 73, histidine 90, and cysteine 97.

The protein belongs to the IAP family. Component of the CPC at least composed of survivin/birc5, incenp, cdca8/borealin and/or cdca9/dasra-A, and aurkb/aurora-B. Interacts directly with incenp (via N-terminus). Interacts with rxra; the interaction is stronger in the absence of 9-cis retinoic acids. Ubiquitination is required for centrosome-targeting. In terms of tissue distribution, exhibits strong and homogeneous expression in developing oocytes. In embryos, expressed in the animal hemisphere from one-cell to yolk plug stages, and highly expressed in the future brain and dorsal region of the neural tube at the neurula stage and early tail-bud stage. At tadpole stages, expression is restricted at a low level to the head region.

The protein resides in the cytoplasm. It localises to the nucleus. Its subcellular location is the chromosome. It is found in the centromere. The protein localises to the cytoskeleton. The protein resides in the spindle. Does not appear to exhibit anti-apoptotic activity. Plays a role in increasing blood vessel size during development. Component of the chromosomal passenger complex (CPC), a complex that acts as a key regulator of mitosis. The CPC complex has essential functions at the centromere in ensuring correct chromosome alignment and segregation and is required for chromatin-induced microtubule stabilization and spindle assembly. This Xenopus laevis (African clawed frog) protein is Baculoviral IAP repeat-containing protein 5.2-B (birc5.2-b).